A 348-amino-acid polypeptide reads, in one-letter code: Growth-regulating factor 5 (348 aa).

One can recognise a QLQ domain in the interval 24–59 (VFTAAQWAELEQQALIYKYLVAGVPVPGDLLLPIRP). Short sequence motifs (bipartite nuclear localization signal) lie at residues 94–112 (KKLDPEPWRCRRTDGKKWR) and 130–137 (RGRNRSRK). Positions 97–141 (DPEPWRCRRTDGKKWRCSKEAHPDSKYCERHMHRGRNRSRKPVES) constitute a WRC domain. Disordered regions lie at residues 125 to 165 (ERHM…HDTD) and 306 to 348 (LRPF…PRCD). A compositionally biased stretch (basic residues) spans 127 to 136 (HMHRGRNRSR). A compositionally biased stretch (polar residues) spans 148–161 (PQSQPQLSNVTTAT). The segment covering 306 to 320 (LRPFFDEWPGRRDSW) has biased composition (basic and acidic residues). The segment covering 329 to 340 (NQTSFSTTQLSI) has biased composition (polar residues).

It belongs to the GRF family.

The protein resides in the nucleus. In terms of biological role, transcription activator that plays a regulatory role in gibberellin-induced stem elongation. This Oryza sativa subsp. japonica (Rice) protein is Growth-regulating factor 5 (GRF5).